A 46-amino-acid chain; its full sequence is Endochitinase 4 (46 aa).

This sequence belongs to the glycosyl hydrolase 19 family. Chitinase class I subfamily.

It catalyses the reaction Random endo-hydrolysis of N-acetyl-beta-D-glucosaminide (1-&gt;4)-beta-linkages in chitin and chitodextrins.. Its function is as follows. Defense against chitin-containing fungal and bacterial pathogens. The sequence is that of Endochitinase 4 from Arachis hypogaea (Peanut).